The following is a 391-amino-acid chain: Cathepsin E (391 aa).

The N-terminal stretch at 1–19 (MKTFLLLLLVLLELGQAPG) is a signal peptide. Positions 20–53 (ALHRVPLSRRESLRKKLRAQGQLTELWKSQNLNM) are cleaved as a propeptide — activation peptide. The Peptidase A1 domain maps to 74 to 387 (YFGTISIGSP…DRGNNRVGLA (314 aa)). N-linked (GlcNAc...) asparagine glycosylation occurs at Asn-86. Asp-92 is a catalytic residue. Intrachain disulfides connect Cys-105/Cys-110 and Cys-267/Cys-271. The active site involves Asp-276. Cysteines 309 and 346 form a disulfide.

It belongs to the peptidase A1 family. Homodimer; disulfide-linked. Post-translationally, glycosylated. The nature of the carbohydrate chain varies between cell types. Expressed abundantly in the surface and foveolar epithelial cells of the fundic and pyloric stomach mucosa, and at very low levels in the spleen.

It is found in the endosome. The catalysed reaction is Similar to cathepsin D, but slightly broader specificity.. Its function is as follows. May have a role in immune function. Probably involved in the processing of antigenic peptides during MHC class II-mediated antigen presentation. May play a role in activation-induced lymphocyte depletion in the thymus, and in neuronal degeneration and glial cell activation in the brain. The sequence is that of Cathepsin E (CTSE) from Cavia porcellus (Guinea pig).